The chain runs to 302 residues: Putative cyclin-D6-1 (302 aa).

It belongs to the cyclin family. Cyclin D subfamily.

The chain is Putative cyclin-D6-1 (CYCD6-1) from Arabidopsis thaliana (Mouse-ear cress).